The primary structure comprises 120 residues: MRLLAQLLGLLMLWVPGSSGDIVMTQTPLSSPVTLGQPASISCRSSQSLVHSDGNTYLSWLQQRPGQPPRLLIYKISNRFSGVPDRFSGSGAGTDFTLKISRVEAEDVGVYYCMQATQFP.

The N-terminal stretch at methionine 1 to serine 19 is a signal peptide. Residues glycine 20 to proline 120 form the Ig-like domain. Residues aspartate 21–cysteine 43 form a framework-1 region. The cysteines at positions 43 and 113 are disulfide-linked. The interval arginine 44–serine 59 is complementarity-determining-1. Residues tryptophan 60 to tyrosine 74 form a framework-2 region. Positions lysine 75–serine 81 are complementarity-determining-2. The framework-3 stretch occupies residues glycine 82–cysteine 113. Residues methionine 114–proline 120 form a complementarity-determining-3 region.

Immunoglobulins are composed of two identical heavy chains and two identical light chains; disulfide-linked.

It is found in the secreted. The protein resides in the cell membrane. In terms of biological role, v region of the variable domain of immunoglobulin light chains that participates in the antigen recognition. Immunoglobulins, also known as antibodies, are membrane-bound or secreted glycoproteins produced by B lymphocytes. In the recognition phase of humoral immunity, the membrane-bound immunoglobulins serve as receptors which, upon binding of a specific antigen, trigger the clonal expansion and differentiation of B lymphocytes into immunoglobulins-secreting plasma cells. Secreted immunoglobulins mediate the effector phase of humoral immunity, which results in the elimination of bound antigens. The antigen binding site is formed by the variable domain of one heavy chain, together with that of its associated light chain. Thus, each immunoglobulin has two antigen binding sites with remarkable affinity for a particular antigen. The variable domains are assembled by a process called V-(D)-J rearrangement and can then be subjected to somatic hypermutations which, after exposure to antigen and selection, allow affinity maturation for a particular antigen. The sequence is that of Immunoglobulin kappa variable 2-24 from Homo sapiens (Human).